The sequence spans 429 residues: MSDNDTNVKQWKVRRLIATLEAARGNGTSMISLVIKPKDEISRISKMLADEYGTASNIKSRVNRLSVLSAITSTQQRLKLYNRTPQNGLVVYCGTLITEDGKEKKVNIDFEPFKPINTSLYLCDNKFHVDALKELLETDDKFGFIIVDGNGALYGVVQGSSREVLLRFNVDLPKKHGRGGQSALRFARLRMEKRHNYLRKVAETATTMFITNDQVNVAALILAGSADFKNELAQSDIFDQRLASKILKIVDVSYGGDNGFNQAIELSSDALQNVKFVQEKKLITKFFDEVAQDTGKYVYGINETLQALEMGAIELLIVWENLETKRMVVKNPSTGEEKVFLNSPTEQHDESKFKDPETGAELDVIEILPLTEWLVNTYQNYGAQLEFVTNKSQEGNQFQKGFGGFGGILRYKVDFQDYAVVEDDLDEFI.

It belongs to the eukaryotic release factor 1 family. As to quaternary structure, heterodimer of two subunits, one of which binds GTP.

Its subcellular location is the cytoplasm. Its function is as follows. Directs the termination of nascent peptide synthesis (translation) in response to the termination codons UAA, UAG and UGA. The sequence is that of Eukaryotic peptide chain release factor subunit 1 (erf1) from Cryptosporidium hominis.